A 79-amino-acid chain; its full sequence is Small ribosomal subunit protein bS18 (79 aa).

The protein belongs to the bacterial ribosomal protein bS18 family. As to quaternary structure, part of the 30S ribosomal subunit. Forms a tight heterodimer with protein bS6.

In terms of biological role, binds as a heterodimer with protein bS6 to the central domain of the 16S rRNA, where it helps stabilize the platform of the 30S subunit. This chain is Small ribosomal subunit protein bS18, found in Enterococcus faecalis (strain ATCC 700802 / V583).